A 232-amino-acid chain; its full sequence is 5'-methylthioadenosine/S-adenosylhomocysteine nucleosidase (232 aa).

Glu12 (proton acceptor) is an active-site residue. Substrate contacts are provided by residues Gly78, Ile152, and 173 to 174; that span reads ME. Asp197 serves as the catalytic Proton donor.

It belongs to the PNP/UDP phosphorylase family. MtnN subfamily. Homodimer.

It carries out the reaction S-adenosyl-L-homocysteine + H2O = S-(5-deoxy-D-ribos-5-yl)-L-homocysteine + adenine. It catalyses the reaction S-methyl-5'-thioadenosine + H2O = 5-(methylsulfanyl)-D-ribose + adenine. The enzyme catalyses 5'-deoxyadenosine + H2O = 5-deoxy-D-ribose + adenine. It participates in amino-acid biosynthesis; L-methionine biosynthesis via salvage pathway; S-methyl-5-thio-alpha-D-ribose 1-phosphate from S-methyl-5'-thioadenosine (hydrolase route): step 1/2. Functionally, catalyzes the irreversible cleavage of the glycosidic bond in both 5'-methylthioadenosine (MTA) and S-adenosylhomocysteine (SAH/AdoHcy) to adenine and the corresponding thioribose, 5'-methylthioribose and S-ribosylhomocysteine, respectively. Also cleaves 5'-deoxyadenosine, a toxic by-product of radical S-adenosylmethionine (SAM) enzymes, into 5-deoxyribose and adenine. Thus, is required for in vivo function of the radical SAM enzymes biotin synthase and lipoic acid synthase, that are inhibited by 5'-deoxyadenosine accumulation. This chain is 5'-methylthioadenosine/S-adenosylhomocysteine nucleosidase, found in Escherichia coli O9:H4 (strain HS).